Consider the following 150-residue polypeptide: Keratin-associated protein 15-1 (150 aa).

The protein belongs to the PMG family. Interacts with hair keratins. As to expression, expressed at high levels in skin and at lower levels in the developing mammary gland.

Functionally, in the hair cortex, hair keratin intermediate filaments are embedded in an interfilamentous matrix, consisting of hair keratin-associated proteins (KRTAP), which are essential for the formation of a rigid and resistant hair shaft through their extensive disulfide bond cross-linking with abundant cysteine residues of hair keratins. The matrix proteins include the high-sulfur and high-glycine-tyrosine keratins. The chain is Keratin-associated protein 15-1 from Mus musculus (Mouse).